A 294-amino-acid chain; its full sequence is 4-diphosphocytidyl-2-C-methyl-D-erythritol kinase (294 aa).

Lys11 is a catalytic residue. An ATP-binding site is contributed by 93–103 (PFGAGLGGGSS). Residue Asp135 is part of the active site.

It belongs to the GHMP kinase family. IspE subfamily.

The catalysed reaction is 4-CDP-2-C-methyl-D-erythritol + ATP = 4-CDP-2-C-methyl-D-erythritol 2-phosphate + ADP + H(+). The protein operates within isoprenoid biosynthesis; isopentenyl diphosphate biosynthesis via DXP pathway; isopentenyl diphosphate from 1-deoxy-D-xylulose 5-phosphate: step 3/6. Functionally, catalyzes the phosphorylation of the position 2 hydroxy group of 4-diphosphocytidyl-2C-methyl-D-erythritol. The chain is 4-diphosphocytidyl-2-C-methyl-D-erythritol kinase from Chlorobium phaeobacteroides (strain DSM 266 / SMG 266 / 2430).